We begin with the raw amino-acid sequence, 97 residues long: RNA-binding protein Hfq (97 aa).

The Sm domain occupies 10–70 (DPFLNALRKE…ISTIVPARSV (61 aa)). Positions 75–97 (ENRPQAAPASTLVQVETVQQPAE) are disordered. Over residues 85 to 97 (TLVQVETVQQPAE) the composition is skewed to polar residues.

Belongs to the Hfq family. Homohexamer.

Functionally, RNA chaperone that binds small regulatory RNA (sRNAs) and mRNAs to facilitate mRNA translational regulation in response to envelope stress, environmental stress and changes in metabolite concentrations. Also binds with high specificity to tRNAs. The chain is RNA-binding protein Hfq from Neisseria meningitidis serogroup C / serotype 2a (strain ATCC 700532 / DSM 15464 / FAM18).